We begin with the raw amino-acid sequence, 497 residues long: ATP synthase subunit alpha 2 (497 aa).

Residue 167–174 (GERATGKT) coordinates ATP.

Belongs to the ATPase alpha/beta chains family. As to quaternary structure, F-type ATPases have 2 components, CF(1) - the catalytic core - and CF(0) - the membrane proton channel. CF(1) has five subunits: alpha(3), beta(3), gamma(1), delta(1), epsilon(1). CF(0) has four main subunits: a(1), b(1), b'(1) and c(9-12).

It localises to the cell inner membrane. The enzyme catalyses ATP + H2O + 4 H(+)(in) = ADP + phosphate + 5 H(+)(out). Produces ATP from ADP in the presence of a proton gradient across the membrane. The alpha chain is a regulatory subunit. This Cereibacter sphaeroides (strain ATCC 17023 / DSM 158 / JCM 6121 / CCUG 31486 / LMG 2827 / NBRC 12203 / NCIMB 8253 / ATH 2.4.1.) (Rhodobacter sphaeroides) protein is ATP synthase subunit alpha 2.